The sequence spans 269 residues: Hemin import ATP-binding protein HmuV (269 aa).

An ABC transporter domain is found at 2–242; it reads LEVIHTGLNI…AMVEACFDLP (241 aa). Position 34–41 (34–41) interacts with ATP; that stretch reads GPNGAGKS.

It belongs to the ABC transporter superfamily. Heme (hemin) importer (TC 3.A.1.14.5) family. The complex is composed of two ATP-binding proteins (HmuV), two transmembrane proteins (HmuU) and a solute-binding protein (HmuT).

The protein resides in the cell inner membrane. Functionally, part of the ABC transporter complex HmuTUV involved in hemin import. Responsible for energy coupling to the transport system. The polypeptide is Hemin import ATP-binding protein HmuV (Methylobacillus flagellatus (strain ATCC 51484 / DSM 6875 / VKM B-1610 / KT)).